Consider the following 406-residue polypeptide: Tryptophan synthase beta chain (406 aa).

Position 99 is an N6-(pyridoxal phosphate)lysine (K99).

It belongs to the TrpB family. Tetramer of two alpha and two beta chains. Pyridoxal 5'-phosphate is required as a cofactor.

It carries out the reaction (1S,2R)-1-C-(indol-3-yl)glycerol 3-phosphate + L-serine = D-glyceraldehyde 3-phosphate + L-tryptophan + H2O. The protein operates within amino-acid biosynthesis; L-tryptophan biosynthesis; L-tryptophan from chorismate: step 5/5. The beta subunit is responsible for the synthesis of L-tryptophan from indole and L-serine. The chain is Tryptophan synthase beta chain from Brucella canis (strain ATCC 23365 / NCTC 10854 / RM-666).